A 195-amino-acid chain; its full sequence is Calcium channel flower (195 aa).

Helical transmembrane passes span 34–54 (LLGI…VISI), 66–88 (IIQM…VCIE), and 117–137 (IFMC…ATGV).

This sequence belongs to the calcium channel flower family. As to quaternary structure, homomultimer. Associates with the dally/ magu complex.

The protein localises to the cell membrane. The protein resides in the cytoplasmic vesicle. It localises to the secretory vesicle. Its subcellular location is the synaptic vesicle membrane. It is found in the presynaptic cell membrane. The protein localises to the endosome. With respect to regulation, channel activity is inhibited by La(3+), which reduces Ca(2+) influx and thus inhibits it's function in promoting activity-dependent bulk endocytosis (ADBE) in response to high stimuli. Functionally, transmembrane protein which mediates synaptic endocytosis, fitness-based cell culling, neuronal culling, morphogen gradient scaling, and calcium transport. Regulates synaptic endocytosis and hence couples exo- with endocytosis. Controls two major modes of synaptic vesicle (SV) endocytosis in the synaptic boutons of neuromuscular junctions (NMJs); Ca(2+) channel-independent Clathrin-mediated endocytosis (CME) in response to mild stimulation, and Ca(2+) channel-dependent activity-dependent bulk endocytosis (ADBE) in response to strong stimulation. Functions in ADBE and subsequent SV reformation from bulk endosomes by initiating Ca(2+) channel-dependent phosphatidylinositol 4,5-bisphosphate (PtdIns(4,5)P2) compartmentalization in synaptic boutons. There it acts at the periactive zone to provide the low Ca(2+) levels required to initiate Calcineurin activation and upregulate PtdIns(4,5)P2. Conversely PtdIns(4,5)P2 enhances fwe Ca(2+) channel-activity, establishing a positive feedback loop that induces PtdIns(4,5)P2 microdomain at the periactive zone. These microdomains trigger bulk membrane invagination (i.e. ADBE) by triggering actin polymerization while also promoting localization of fwe to bulk endosomes, thereby removing the ADBE trigger to reduce endocytosis and prevent excess membrane uptake. PtdIns(4,5)P2 then promotes SV reformation from the bulk endosomes, to coordinate ADBE and subsequent SV reformation. Different combinations of the flower isoforms at the cell membrane are also required for the identification and elimination of suboptimal or supernumerary cells during development, regeneration, and adulthood. Required for the recognition and elimination of unfit cells in the developing wing during cell competition. In the developing pupal retina, mediates the elimination of unwanted postmitotic neurons, including supernumerary photoreceptor neurons that form at the periphery of the retina and are contained within incomplete ommatidia units. Also required for efficient elimination and replacement of old neurons by newly generated neurons during regeneration in the adult brain following mechanical injury. Downstream of the flower fitness fingerprints, cells identified as unwanted or unfit are eliminated via apoptosis through the expression of ahuizotl (azot). However, the cells marked for elimination by the flower isoforms only undergo apoptosis if additional thresholds are met; (1) their neighboring fit/healthy cells express different levels of the fwe isoforms, and (2) the levels of the protective signal SPARC expressed by the loser or unwanted cells are unable to inhibit caspase activation. These additional thresholds for flower-mediated apoptosis, allows useful cells to recover from transient and limited stress before they are unnecessarily eliminated. Functions with dally and magu in a mechanism of scaling, which utilises apoptosis to ensure that the dpp morphogen gradient, which mediates organ growth, remains proportional to the size of the growing wing. In this mechanism, fwe represses dally- and Magu-dependent activity in expanding the gradient, and dally/Magu inhibits fwe-dependent apoptosis to keep cell death rate low. When the levels of these different proteins are optimally regulated the gradient correctly scales with organ growth but when this fails, fwe-mediated apoptosis is activated to trim the developing tissue to match the correct size of the gradient. This is Calcium channel flower from Drosophila ananassae (Fruit fly).